Consider the following 275-residue polypeptide: Pantothenate synthetase (275 aa).

Residue 26-33 (MGFLHEGH) coordinates ATP. The active-site Proton donor is the His33. Gln57 contacts (R)-pantoate. Gln57 lines the beta-alanine pocket. An ATP-binding site is contributed by 143-146 (GQKD). Gln149 contacts (R)-pantoate. ATP is bound by residues Ala172 and 180-183 (RSSR).

This sequence belongs to the pantothenate synthetase family. Homodimer.

It localises to the cytoplasm. It carries out the reaction (R)-pantoate + beta-alanine + ATP = (R)-pantothenate + AMP + diphosphate + H(+). It functions in the pathway cofactor biosynthesis; (R)-pantothenate biosynthesis; (R)-pantothenate from (R)-pantoate and beta-alanine: step 1/1. Catalyzes the condensation of pantoate with beta-alanine in an ATP-dependent reaction via a pantoyl-adenylate intermediate. The protein is Pantothenate synthetase of Gluconobacter oxydans (strain 621H) (Gluconobacter suboxydans).